The primary structure comprises 232 residues: Large ribosomal subunit protein uL1 (232 aa).

Belongs to the universal ribosomal protein uL1 family. As to quaternary structure, part of the 50S ribosomal subunit.

Functionally, binds directly to 23S rRNA. The L1 stalk is quite mobile in the ribosome, and is involved in E site tRNA release. Its function is as follows. Protein L1 is also a translational repressor protein, it controls the translation of the L11 operon by binding to its mRNA. The sequence is that of Large ribosomal subunit protein uL1 from Rhizorhabdus wittichii (strain DSM 6014 / CCUG 31198 / JCM 15750 / NBRC 105917 / EY 4224 / RW1) (Sphingomonas wittichii).